The chain runs to 547 residues: Glucose-6-phosphate isomerase (547 aa).

E354 (proton donor) is an active-site residue. Active-site residues include H385 and K513.

The protein belongs to the GPI family.

It is found in the cytoplasm. It catalyses the reaction alpha-D-glucose 6-phosphate = beta-D-fructose 6-phosphate. The protein operates within carbohydrate biosynthesis; gluconeogenesis. Its pathway is carbohydrate degradation; glycolysis; D-glyceraldehyde 3-phosphate and glycerone phosphate from D-glucose: step 2/4. Functionally, catalyzes the reversible isomerization of glucose-6-phosphate to fructose-6-phosphate. This is Glucose-6-phosphate isomerase from Endomicrobium trichonymphae.